Reading from the N-terminus, the 296-residue chain is MSYTKDNDKLYRYLFQNRAVRGEWVRLNDTFTETLNTHQYPKAVQNLLGEMLVATSLLTAIMKFEGTITVQIQGDGPLKLAVVNGNEKQQLRALARTQAEIADNASLSEMIGNGVLVISIMPNDGERYQGVIALDKPTIRECLEDYFIRSEQLQTHLVIRTGEYEGKAVAGGLLLQIMPDGTGTPEDFEHLMTLAETVKDEELFGLEAEELLFRLYHEEQVEVYPPQETEFHCGCSRGRSGNAILLLPMEEIDEMLAEKNGVIDMQCECCGTQYFFDKNAIMEFKQEADKLNQLGL.

Disulfide bonds link Cys-233/Cys-235 and Cys-267/Cys-270.

The protein belongs to the HSP33 family. Under oxidizing conditions two disulfide bonds are formed involving the reactive cysteines. Under reducing conditions zinc is bound to the reactive cysteines and the protein is inactive.

Its subcellular location is the cytoplasm. In terms of biological role, redox regulated molecular chaperone. Protects both thermally unfolding and oxidatively damaged proteins from irreversible aggregation. Plays an important role in the bacterial defense system toward oxidative stress. This Actinobacillus pleuropneumoniae serotype 5b (strain L20) protein is 33 kDa chaperonin.